Consider the following 145-residue polypeptide: Transcriptional regulator SlyA (145 aa).

The 134-residue stretch at 2 to 135 (ELPLGSDLAR…LALLVARLEK (134 aa)) folds into the HTH marR-type domain. The H-T-H motif DNA-binding region spans 49–72 (QIQLAKAIGIEQPSLVRTLDQLEE).

This sequence belongs to the SlyA family. As to quaternary structure, homodimer.

Its function is as follows. Transcription regulator that can specifically activate or repress expression of target genes. This chain is Transcriptional regulator SlyA, found in Pectobacterium carotovorum subsp. carotovorum (strain PC1).